Here is a 342-residue protein sequence, read N- to C-terminus: Protein RecA 1 (342 aa).

Position 68-75 (68-75) interacts with ATP; the sequence is GNESSGKT.

It belongs to the RecA family.

It is found in the cytoplasm. In terms of biological role, can catalyze the hydrolysis of ATP in the presence of single-stranded DNA, the ATP-dependent uptake of single-stranded DNA by duplex DNA, and the ATP-dependent hybridization of homologous single-stranded DNAs. It interacts with LexA causing its activation and leading to its autocatalytic cleavage. This Myxococcus xanthus protein is Protein RecA 1.